The chain runs to 398 residues: 1-deoxy-D-xylulose 5-phosphate reductoisomerase (398 aa).

Positions 11, 12, 13, 14, 38, 39, and 125 each coordinate NADPH. Lys126 contributes to the 1-deoxy-D-xylulose 5-phosphate binding site. Glu127 serves as a coordination point for NADPH. Asp151 is a binding site for Mn(2+). The 1-deoxy-D-xylulose 5-phosphate site is built by Ser152, Glu153, Ser179, and His202. Glu153 is a binding site for Mn(2+). Residue Gly208 participates in NADPH binding. 1-deoxy-D-xylulose 5-phosphate contacts are provided by Ser215, Asn220, Lys221, and Glu224. Residue Glu224 coordinates Mn(2+).

It belongs to the DXR family. Requires Mg(2+) as cofactor. It depends on Mn(2+) as a cofactor.

It catalyses the reaction 2-C-methyl-D-erythritol 4-phosphate + NADP(+) = 1-deoxy-D-xylulose 5-phosphate + NADPH + H(+). It participates in isoprenoid biosynthesis; isopentenyl diphosphate biosynthesis via DXP pathway; isopentenyl diphosphate from 1-deoxy-D-xylulose 5-phosphate: step 1/6. Functionally, catalyzes the NADPH-dependent rearrangement and reduction of 1-deoxy-D-xylulose-5-phosphate (DXP) to 2-C-methyl-D-erythritol 4-phosphate (MEP). The sequence is that of 1-deoxy-D-xylulose 5-phosphate reductoisomerase from Burkholderia lata (strain ATCC 17760 / DSM 23089 / LMG 22485 / NCIMB 9086 / R18194 / 383).